A 388-amino-acid chain; its full sequence is uncharacterized protein (388 aa).

This is an uncharacterized protein from Ictaluridae (bullhead catfishes).